The chain runs to 61 residues: Large ribosomal subunit protein uL30 (61 aa).

It belongs to the universal ribosomal protein uL30 family. As to quaternary structure, part of the 50S ribosomal subunit.

The chain is Large ribosomal subunit protein uL30 from Lacticaseibacillus casei (strain BL23) (Lactobacillus casei).